A 429-amino-acid polypeptide reads, in one-letter code: Asparagine--tRNA ligase (429 aa).

The protein belongs to the class-II aminoacyl-tRNA synthetase family. Homodimer.

It is found in the cytoplasm. The catalysed reaction is tRNA(Asn) + L-asparagine + ATP = L-asparaginyl-tRNA(Asn) + AMP + diphosphate + H(+). This is Asparagine--tRNA ligase from Desulforamulus reducens (strain ATCC BAA-1160 / DSM 100696 / MI-1) (Desulfotomaculum reducens).